Here is a 229-residue protein sequence, read N- to C-terminus: Lipoprotein-releasing system ATP-binding protein LolD (229 aa).

The region spanning 6–229 (LELDAIERTY…DGHLTPYVPA (224 aa)) is the ABC transporter domain. 42–49 (GPSGSGKS) lines the ATP pocket.

This sequence belongs to the ABC transporter superfamily. Lipoprotein translocase (TC 3.A.1.125) family. In terms of assembly, the complex is composed of two ATP-binding proteins (LolD) and two transmembrane proteins (LolC and LolE).

It localises to the cell inner membrane. Its function is as follows. Part of the ABC transporter complex LolCDE involved in the translocation of mature outer membrane-directed lipoproteins, from the inner membrane to the periplasmic chaperone, LolA. Responsible for the formation of the LolA-lipoprotein complex in an ATP-dependent manner. The polypeptide is Lipoprotein-releasing system ATP-binding protein LolD (Maricaulis maris (strain MCS10) (Caulobacter maris)).